A 122-amino-acid polypeptide reads, in one-letter code: Large ribosomal subunit protein bL12 (122 aa).

The protein belongs to the bacterial ribosomal protein bL12 family. In terms of assembly, homodimer. Part of the ribosomal stalk of the 50S ribosomal subunit. Forms a multimeric L10(L12)X complex, where L10 forms an elongated spine to which 2 to 4 L12 dimers bind in a sequential fashion. Binds GTP-bound translation factors.

Functionally, forms part of the ribosomal stalk which helps the ribosome interact with GTP-bound translation factors. Is thus essential for accurate translation. In Levilactobacillus brevis (strain ATCC 367 / BCRC 12310 / CIP 105137 / JCM 1170 / LMG 11437 / NCIMB 947 / NCTC 947) (Lactobacillus brevis), this protein is Large ribosomal subunit protein bL12.